We begin with the raw amino-acid sequence, 202 residues long: Holliday junction branch migration complex subunit RuvA (202 aa).

Residues 1–64 (MIGRLRGSLA…EDAHLLYGFY (64 aa)) are domain I. The interval 65–143 (EKRERELFRE…AWESLPGTFT (79 aa)) is domain II. The tract at residues 144–153 (LVSNGPNQAE) is flexible linker. A domain III region spans residues 154-202 (PVASAESDAVSALISLGYKPQEASKAVSAIKEKDLSSADLIRRALKGMG).

It belongs to the RuvA family. Homotetramer. Forms an RuvA(8)-RuvB(12)-Holliday junction (HJ) complex. HJ DNA is sandwiched between 2 RuvA tetramers; dsDNA enters through RuvA and exits via RuvB. An RuvB hexamer assembles on each DNA strand where it exits the tetramer. Each RuvB hexamer is contacted by two RuvA subunits (via domain III) on 2 adjacent RuvB subunits; this complex drives branch migration. In the full resolvosome a probable DNA-RuvA(4)-RuvB(12)-RuvC(2) complex forms which resolves the HJ.

It localises to the cytoplasm. The RuvA-RuvB-RuvC complex processes Holliday junction (HJ) DNA during genetic recombination and DNA repair, while the RuvA-RuvB complex plays an important role in the rescue of blocked DNA replication forks via replication fork reversal (RFR). RuvA specifically binds to HJ cruciform DNA, conferring on it an open structure. The RuvB hexamer acts as an ATP-dependent pump, pulling dsDNA into and through the RuvAB complex. HJ branch migration allows RuvC to scan DNA until it finds its consensus sequence, where it cleaves and resolves the cruciform DNA. This is Holliday junction branch migration complex subunit RuvA from Pseudomonas savastanoi pv. phaseolicola (strain 1448A / Race 6) (Pseudomonas syringae pv. phaseolicola (strain 1448A / Race 6)).